The sequence spans 178 residues: ATP synthase subunit d, mitochondrial (178 aa).

Residues asparagine 149–histidine 178 are disordered. Residues lysine 165 to histidine 178 are compositionally biased toward basic and acidic residues.

Belongs to the ATPase d subunit family. In terms of assembly, F-type ATPases have 2 components, CF(1) - the catalytic core - and CF(0) - the membrane proton channel. CF(0) seems to have nine subunits: a, b, c, d, e, f, g, F6 and 8 (or A6L).

It localises to the mitochondrion. The protein localises to the mitochondrion inner membrane. Functionally, mitochondrial membrane ATP synthase (F(1)F(0) ATP synthase or Complex V) produces ATP from ADP in the presence of a proton gradient across the membrane which is generated by electron transport complexes of the respiratory chain. F-type ATPases consist of two structural domains, F(1) - containing the extramembraneous catalytic core, and F(0) - containing the membrane proton channel, linked together by a central stalk and a peripheral stalk. During catalysis, ATP synthesis in the catalytic domain of F(1) is coupled via a rotary mechanism of the central stalk subunits to proton translocation. Part of the complex F(0) domain and the peripheric stalk, which acts as a stator to hold the catalytic alpha(3)beta(3) subcomplex and subunit a/ATP6 static relative to the rotary elements. The sequence is that of ATP synthase subunit d, mitochondrial from Drosophila melanogaster (Fruit fly).